A 245-amino-acid chain; its full sequence is Transcriptional regulatory protein VxrB (245 aa).

The region spanning 31–142 is the Response regulatory domain; that stretch reads TLLLVEDDKN…ELFARIRAQL (112 aa). At D78 the chain carries 4-aspartylphosphate. A DNA-binding region (ompR/PhoB-type) is located at residues 151–245; the sequence is DSKVVTSNLT…LRGVGYKMKA (95 aa).

Phosphorylated by VxrA.

Its subcellular location is the cytoplasm. In terms of biological role, member of the two-component regulatory system VxrB/VxrA involved in the regulation of diverses processes, including virulence, the type VI secretion system (T6SS) and biofilm formation. VxrB positively regulates the expression of the T6SS, a virulence nanomachine that directly translocates effectors into bacterial or host cells, thereby facilitating colonization by competing with sister cells and intestinal microbiota. In addition, it activates vpsL expression and biofilm formation, and represses motility. May regulate biofilm formation via its regulation of key biofilm regulators and cyclic di-GMP levels. Significantly contributes to both attack and defense via T6SS, while also influencing competition via regulation of biofilm matrix production. Is critical for colonization in the infant mouse model. This chain is Transcriptional regulatory protein VxrB, found in Vibrio cholerae serotype O1 (strain ATCC 39315 / El Tor Inaba N16961).